Consider the following 24-residue polypeptide: Brevinin-1BYb (24 aa).

A disulfide bridge links C18 with C24.

In terms of tissue distribution, expressed by the skin glands.

The protein resides in the secreted. Its function is as follows. Antibacterial activity against Gram-positive bacterium S.aureus and Gram-negative bacterium E.coli. Has moderate antifungal activity against C.albicans and strong hemolytic activity. In Rana boylii (Foothill yellow-legged frog), this protein is Brevinin-1BYb.